Reading from the N-terminus, the 234-residue chain is STARD3 N-terminal-like protein (234 aa).

M1 is subject to N-acetylmethionine. At M1–R53 the chain is on the cytoplasmic side. Phosphoserine is present on residues S15, S21, and S27. An MENTAL domain is found at I48–S218. A helical membrane pass occupies residues T54–L74. Residues N75–Y97 lie on the Extracellular side of the membrane. A helical transmembrane segment spans residues F98–C118. Residues R119–H122 are Cytoplasmic-facing. Residues W123 to L143 form a helical membrane-spanning segment. Over S144–G150 the chain is Extracellular. Residues A151 to L171 traverse the membrane as a helical segment. Over D172–L234 the chain is Cytoplasmic. S193 carries the post-translational modification Phosphoserine. A disordered region spans residues P200–L234. The FFAT signature appears at F208–E213. The segment covering K224 to L234 has biased composition (basic and acidic residues).

The protein belongs to the STARD3 family. In terms of assembly, homodimer. Interacts (via the MENTAL domain) with STARD3NL. Interacts (via FFAT motif) with VAPA. Interacts (via FFAT motif) with VAPB. Interacts (via FFAT motif) with MOSPD2 (via MSP domain).

Its subcellular location is the late endosome membrane. Functionally, tethering protein that creates contact site between the endoplasmic reticulum and late endosomes: localizes to late endosome membranes and contacts the endoplasmic reticulum via interaction with VAPA and VAPB. The chain is STARD3 N-terminal-like protein from Homo sapiens (Human).